The following is a 157-amino-acid chain: 6,7-dimethyl-8-ribityllumazine synthase (157 aa).

5-amino-6-(D-ribitylamino)uracil contacts are provided by residues Phe-24, Ser-58–Glu-60, and Ala-82–Ile-84. Position 87-88 (Glu-87–Thr-88) interacts with (2S)-2-hydroxy-3-oxobutyl phosphate. His-90 functions as the Proton donor in the catalytic mechanism. Phe-115 serves as a coordination point for 5-amino-6-(D-ribitylamino)uracil. A (2S)-2-hydroxy-3-oxobutyl phosphate-binding site is contributed by Arg-129.

Belongs to the DMRL synthase family.

It carries out the reaction (2S)-2-hydroxy-3-oxobutyl phosphate + 5-amino-6-(D-ribitylamino)uracil = 6,7-dimethyl-8-(1-D-ribityl)lumazine + phosphate + 2 H2O + H(+). It functions in the pathway cofactor biosynthesis; riboflavin biosynthesis; riboflavin from 2-hydroxy-3-oxobutyl phosphate and 5-amino-6-(D-ribitylamino)uracil: step 1/2. Its function is as follows. Catalyzes the formation of 6,7-dimethyl-8-ribityllumazine by condensation of 5-amino-6-(D-ribitylamino)uracil with 3,4-dihydroxy-2-butanone 4-phosphate. This is the penultimate step in the biosynthesis of riboflavin. This Thermus thermophilus (strain ATCC BAA-163 / DSM 7039 / HB27) protein is 6,7-dimethyl-8-ribityllumazine synthase.